The chain runs to 505 residues: 2,3-bisphosphoglycerate-independent phosphoglycerate mutase (505 aa).

Residues Asp12 and Ser62 each coordinate Mn(2+). The active-site Phosphoserine intermediate is the Ser62. Substrate-binding positions include His123, 153-154 (RD), Arg185, Arg191, 257-260 (RPDR), and Lys330. 5 residues coordinate Mn(2+): Asp397, His401, Asp438, His439, and His456.

It belongs to the BPG-independent phosphoglycerate mutase family. Monomer. Mn(2+) is required as a cofactor.

The catalysed reaction is (2R)-2-phosphoglycerate = (2R)-3-phosphoglycerate. The protein operates within carbohydrate degradation; glycolysis; pyruvate from D-glyceraldehyde 3-phosphate: step 3/5. Its function is as follows. Catalyzes the interconversion of 2-phosphoglycerate and 3-phosphoglycerate. This is 2,3-bisphosphoglycerate-independent phosphoglycerate mutase from Staphylococcus haemolyticus (strain JCSC1435).